The sequence spans 166 residues: Large ribosomal subunit protein uL10 (166 aa).

It belongs to the universal ribosomal protein uL10 family. Part of the ribosomal stalk of the 50S ribosomal subunit. The N-terminus interacts with L11 and the large rRNA to form the base of the stalk. The C-terminus forms an elongated spine to which L12 dimers bind in a sequential fashion forming a multimeric L10(L12)X complex.

Its function is as follows. Forms part of the ribosomal stalk, playing a central role in the interaction of the ribosome with GTP-bound translation factors. The protein is Large ribosomal subunit protein uL10 of Bacillus cereus (strain G9842).